A 492-amino-acid chain; its full sequence is Probable glycine dehydrogenase (decarboxylating) subunit 2 (492 aa).

Lysine 274 bears the N6-(pyridoxal phosphate)lysine mark.

This sequence belongs to the GcvP family. C-terminal subunit subfamily. The glycine cleavage system is composed of four proteins: P, T, L and H. In this organism, the P 'protein' is a heterodimer of two subunits. Pyridoxal 5'-phosphate is required as a cofactor.

It carries out the reaction N(6)-[(R)-lipoyl]-L-lysyl-[glycine-cleavage complex H protein] + glycine + H(+) = N(6)-[(R)-S(8)-aminomethyldihydrolipoyl]-L-lysyl-[glycine-cleavage complex H protein] + CO2. The glycine cleavage system catalyzes the degradation of glycine. The P protein binds the alpha-amino group of glycine through its pyridoxal phosphate cofactor; CO(2) is released and the remaining methylamine moiety is then transferred to the lipoamide cofactor of the H protein. The chain is Probable glycine dehydrogenase (decarboxylating) subunit 2 from Exiguobacterium sibiricum (strain DSM 17290 / CCUG 55495 / CIP 109462 / JCM 13490 / 255-15).